The following is a 130-amino-acid chain: Small ribosomal subunit protein uS11 (130 aa).

The tract at residues 109–130 (EDVTPIPHDGTGRPGGKRGRRV) is disordered.

This sequence belongs to the universal ribosomal protein uS11 family. As to quaternary structure, part of the 30S ribosomal subunit.

Functionally, located on the platform of the 30S subunit. This Methanosphaera stadtmanae (strain ATCC 43021 / DSM 3091 / JCM 11832 / MCB-3) protein is Small ribosomal subunit protein uS11.